A 216-amino-acid chain; its full sequence is Ras-related protein Rab-5C (216 aa).

Ser30, Ala31, Gly33, Lys34, Ser35, Ser36, His47, Glu48, Thr53, and Gly79 together coordinate GTP. Residue Ser35 coordinates Mg(2+). Short sequence motifs (switch) lie at residues 45–57 and 78–94; these read QFHE…IGAA and AGQE…YRGA. Thr53 provides a ligand contact to Mg(2+). Ser85 bears the Phosphoserine mark. GTP is bound by residues Asn134, Lys135, Asp137, Ala165, and Lys166. Residues 185–216 form a disordered region; sequence NEPQNAAGAPGRTRGVDLQESNPASRSQCCSN. Positions 203-216 are enriched in polar residues; that stretch reads QESNPASRSQCCSN. Residues Cys213 and Cys214 are each lipidated (S-geranylgeranyl cysteine).

It belongs to the small GTPase superfamily. Rab family. In terms of assembly, interacts with EEA1 and INCA1. Interacts with GDI1, GDI2, CHML and CHM; phosphorylation at Ser-85 disrupts this interaction. Mg(2+) is required as a cofactor. Post-translationally, phosphorylation of Ser-85 in the switch II region by LRRK2 prevents the association of RAB regulatory proteins, including CHM, CHML and RAB GDP dissociation inhibitors GDI1 and GDI2.

The protein resides in the cell membrane. It is found in the early endosome membrane. Its subcellular location is the melanosome. It carries out the reaction GTP + H2O = GDP + phosphate + H(+). With respect to regulation, regulated by guanine nucleotide exchange factors (GEFs) which promote the exchange of bound GDP for free GTP. Regulated by GTPase activating proteins (GAPs) which increase the GTP hydrolysis activity. Inhibited by GDP dissociation inhibitors (GDIs). In terms of biological role, the small GTPases Rab are key regulators of intracellular membrane trafficking, from the formation of transport vesicles to their fusion with membranes. Rabs cycle between an inactive GDP-bound form and an active GTP-bound form that is able to recruit to membranes different sets of downstream effectors directly responsible for vesicle formation, movement, tethering and fusion. This Mus musculus (Mouse) protein is Ras-related protein Rab-5C.